A 249-amino-acid chain; its full sequence is Type I iodothyronine deiodinase (249 aa).

At 1-12 the chain is on the extracellular side; the sequence is MGLPQPGLWLKR. A helical; Signal-anchor for type III membrane protein transmembrane segment spans residues 13 to 33; that stretch reads LWVLLEVAVHVVVGKVLLILF. Residues 34–249 lie on the Cytoplasmic side of the membrane; that stretch reads PDRVKRNILA…VRAVLEKLHS (216 aa). Sec-126 is an active-site residue. Sec-126 is a non-standard amino acid (selenocysteine).

Belongs to the iodothyronine deiodinase family. In terms of assembly, predominantly monomer. Can form homodimers but homodimerization is not essential for enzyme activity.

The protein resides in the cell membrane. It is found in the endoplasmic reticulum membrane. Its subcellular location is the basolateral cell membrane. It catalyses the reaction 3,3',5-triiodo-L-thyronine + iodide + A + H(+) = L-thyroxine + AH2. It carries out the reaction 3,3',5'-triiodo-L-thyronine + iodide + A + H(+) = L-thyroxine + AH2. The enzyme catalyses 3,3'-diiodo-L-thyronine + iodide + A + H(+) = 3,3',5'-triiodo-L-thyronine + AH2. The catalysed reaction is 3,3'-diiodo-L-thyronine + iodide + A + H(+) = 3,3',5-triiodo-L-thyronine + AH2. It catalyses the reaction 3'-iodo-L-thyronine + iodide + A + H(+) = 3',5'-diiodo-L-thyronine + AH2. It carries out the reaction 3-iodo-L-thyronine + iodide + A + H(+) = 3,5-diiodo-L-thyronine + AH2. The enzyme catalyses 3-iodo-L-thyronine + iodide + A + H(+) = 3,3'-diiodo-L-thyronine + AH2. The catalysed reaction is 3,3'-diiodothyronamine + iodide + A + H(+) = 3,3',5'-triiodothyronamine + AH2. It catalyses the reaction 3'-iodothyronamine + iodide + A + H(+) = 3',5'-diiodothyronamine + AH2. It carries out the reaction 3-iodothyronamine + iodide + A + H(+) = 3,3'-diiodothyronamine + AH2. The enzyme catalyses 3,3'-diiodothyronamine + iodide + A + H(+) = 3,3',5-triiodothyronamine + AH2. The catalysed reaction is 3-iodothyronamine + iodide + A + H(+) = 3,5-diiodothyronamine + AH2. It catalyses the reaction 3,3'-diiodo-L-thyronine sulfate + iodide + A + H(+) = 3,3',5'-triiodo-L-thyronine sulfate + AH2. It carries out the reaction 3,3',5'-triiodo-L-thyronine sulfate + iodide + A + H(+) = L-thyroxine sulfate + AH2. The enzyme catalyses 3,3'-diiodo-L-thyronine sulfate + iodide + A + H(+) = 3,3',5-triiodo-L-thyronine sulfate + AH2. Its activity is regulated as follows. Deiodination of substrates 3,3',5'-triiodothyronine, 3,3',5'-triiodothyronamine and 3',5'- diiodothyronamine are inhibited by 6n-propyl-2-thiouracil (PTU). Its function is as follows. Plays a crucial role in the metabolism of thyroid hormones (TH) and has specific roles in TH activation and inactivation by deiodination. Catalyzes the deiodination of L-thyroxine (T4) to 3,5,3'-triiodothyronine (T3), 3,3',5'-triiodothyronine (rT3) to 3,3'-diiodothyronine (3,3'-T2) and 3',5'-diiodothyronine (3',5'-T2) to 3'-monoiodothyronine (3'-T1) via outer-ring deiodination (ORD). Catalyzes the deiodination of T4 to 3,3',5'-triiodothyronine (rT3) via inner-ring deiodination (IRD). Catalyzes the deiodination of T3 to 3,3'-T2, 3,5-diiodothyronine (3,5-T2) to 3- monoiodothyronine (3-T1) and 3,3'-T2 to 3-T1 via IRD. Catalyzes the phenolic ring deiodinations of 3,3',5'-triiodothyronamine and 3',5'-diiodothyronamine. Catalyzes the phenolic ring deiodination of 3,3'-diiodothyronamine and tyrosyl ring deiodinations of 3,5,3'-triiodothyronamine and 3,5-diiodothyronamine. Catalyzes the deiodination of L-thyroxine sulfate and 3,3',5-triiodo-L-thyronine sulfate via IRD and of 3,3',5'-triiodo-L-thyronine sulfate via ORD. This Homo sapiens (Human) protein is Type I iodothyronine deiodinase (DIO1).